The sequence spans 497 residues: Amino acid oxidase fsqB (497 aa).

Positions 14, 15, 38, 53, 57, 58, 63, 64, and 211 each coordinate FAD. At C414 the chain carries S-8alpha-FAD cysteine. F447 and K448 together coordinate FAD.

It belongs to the MSOX/MTOX family. As to quaternary structure, dimer. The cofactor is FAD.

It carries out the reaction (2S,4S,5S)-2-amino-6-(3,4-dihydroxyphenyl)-4-hydroxy-5-(methylamino)hexanoyl-[peptidyl-carrier protein] + O2 = (2S,4S)-2-amino-4-[(3S)-7,8-dihydroxy-1,2,3,4-tetrahydroisoquinolin-3-yl]-4-hydroxybutanoyl-[peptidyl-carrier protein] + H2O2. The enzyme catalyses N-methyl-L-dopa + O2 = (3S)-7,8-dihydroxy-1,2,3,4-tetrahydroisoquinoline-3-carboxylate + H2O2. It catalyses the reaction N-methyl-D-dopa + O2 = (3R)-7,8-dihydroxy-1,2,3,4-tetrahydroisoquinoline-3-carboxylate + H2O2. The protein operates within secondary metabolite biosynthesis. Its function is as follows. Amino acid oxidase; part of the gene cluster that mediates the biosynthesis of the isoquinoline alkaloids fumisoquin A, fumisoquin B and fumisoquin C; as well as small amounts of fumipyrrole as a shunt metabolite. The products of the cluster lead to a brown coloration and are important for growth and conidiation. The nonribosomal peptide synthetase-like protein fsqF, which lacks a canonical condensation domain, is required for addition of a serine-derived dehydroalanine moiety to activated tyrosine but is not essential for the subsequent steps leading to isoquinoline formation. A different enzyme, most likely the ATP-grasp enzyme fsqD, is responsible for activation of tyrosine. Three additional enzymes encoded by the fsq cluster, the N-methyltransferase fsqC, the phenol 2-monooxygenase fsqG and the FAD-dependent oxidase fsqB, catalyze the formation of the isoquinoline ring system in the fumisoquins. FsqB converts the fspF thiolation domain-bound (2S,4S,5S)-2-amino-6-(3,4-dihydroxyphenyl)-4-hydroxy-5-(methylamino)hexanoyl into isoquinoline. The cyclization most likely proceeds via a two-step mechanism, beginning with FAD-dependent oxidation of the methyl group to an iminium species followed by electrophilic attack on the deprotonated phenol. Is able to convert N-methyl-3,4-dihydroxy-DL-phenylalanine (N-methyl-DOPA) directly into cyclic isoquinoline, in vitro. The absence of the meta-hydroxyl group, as in L-N-methyl-tyrosine, leads to a 25-fold lower rate of reduction and the formation of the demethylated product L-tyrosine, instead of a cyclic product. Does not accept the D-stereoisomer of N-methyltyrosine, in contrast to N-methyl-DOPA, for which both stereoisomers are oxidized with similar rates. The sequence is that of Amino acid oxidase fsqB from Aspergillus fumigatus (strain ATCC MYA-4609 / CBS 101355 / FGSC A1100 / Af293) (Neosartorya fumigata).